Consider the following 143-residue polypeptide: Small ribosomal subunit protein bS6 (143 aa).

Positions 96–143 (VTEASPMAAAKEERRDDRREVKKDVAAAPVEAKEDSVEEKSEEAASEE) are disordered. Positions 105 to 143 (AKEERRDDRREVKKDVAAAPVEAKEDSVEEKSEEAASEE) are enriched in basic and acidic residues.

The protein belongs to the bacterial ribosomal protein bS6 family.

Its function is as follows. Binds together with bS18 to 16S ribosomal RNA. This Colwellia psychrerythraea (strain 34H / ATCC BAA-681) (Vibrio psychroerythus) protein is Small ribosomal subunit protein bS6.